We begin with the raw amino-acid sequence, 982 residues long: Probable beta-galactosidase C (982 aa).

A signal peptide spans methionine 1–alanine 21. Substrate-binding residues include tyrosine 80, asparagine 125, alanine 126, glutamate 127, and asparagine 185. The active-site Proton donor is the glutamate 186. Tyrosine 249 provides a ligand contact to substrate. Cysteine 255 and cysteine 302 are disulfide-bonded. Asparagine 274 carries N-linked (GlcNAc...) asparagine glycosylation. Catalysis depends on glutamate 285, which acts as the Nucleophile. Tyrosine 351 lines the substrate pocket. N-linked (GlcNAc...) asparagine glycans are attached at residues asparagine 389, asparagine 434, asparagine 600, asparagine 675, asparagine 718, and asparagine 785.

Belongs to the glycosyl hydrolase 35 family.

It localises to the secreted. It catalyses the reaction Hydrolysis of terminal non-reducing beta-D-galactose residues in beta-D-galactosides.. In terms of biological role, cleaves beta-linked terminal galactosyl residues from gangliosides, glycoproteins, and glycosaminoglycans. The protein is Probable beta-galactosidase C (lacC) of Penicillium rubens (strain ATCC 28089 / DSM 1075 / NRRL 1951 / Wisconsin 54-1255) (Penicillium chrysogenum).